Consider the following 294-residue polypeptide: Homoserine kinase (294 aa).

83-93 (RPKSGLGSSGA) is an ATP binding site.

This sequence belongs to the GHMP kinase family. Homoserine kinase subfamily.

The protein localises to the cytoplasm. The catalysed reaction is L-homoserine + ATP = O-phospho-L-homoserine + ADP + H(+). It functions in the pathway amino-acid biosynthesis; L-threonine biosynthesis; L-threonine from L-aspartate: step 4/5. Catalyzes the ATP-dependent phosphorylation of L-homoserine to L-homoserine phosphate. This is Homoserine kinase from Pyrococcus abyssi (strain GE5 / Orsay).